We begin with the raw amino-acid sequence, 950 residues long: Protocadherin alpha-3 (950 aa).

The N-terminal stretch at 1–29 (MLFSWREDPGAQCLLLSLLLLAASEVGSG) is a signal peptide. Cadherin domains are found at residues 30 to 133 (QLHY…APVF), 134 to 242 (PMSV…APAF), 243 to 350 (ERTI…VPEL), 351 to 455 (VIHS…APAF), 456 to 565 (SQSE…APAL), and 581 to 678 (VPRS…APKA). Residues 30-697 (QLHYSVSEEA…GPEAALVDVN (668 aa)) lie on the Extracellular side of the membrane. N-linked (GlcNAc...) asparagine glycans are attached at residues Asn257 and Asn265. N-linked (GlcNAc...) asparagine glycosylation occurs at Asn548. A helical transmembrane segment spans residues 698 to 718 (VYLIVAICAVSSLLVLTLLLY). The Cytoplasmic portion of the chain corresponds to 719–950 (TALRCSAPPT…GNSTTDNSDQ (232 aa)). PXXP repeat units follow at residues 734–737 (PGKP) and 774–777 (PSLP). Positions 734-894 (PGKPTLVCSS…PDKFIIPGSP (161 aa)) are 6 X 4 AA repeats of P-X-X-P. Disordered stretches follow at residues 777–806 (PPCPISRDREEKQDVDVDLSAKPRQPNPDW), 831–856 (GPGGPDQQWPTVSSATPEPEAGEVSP), and 869–889 (FKYGPGNPKQSGPGELPDKFI). Residues 782–797 (SRDREEKQDVDVDLSA) show a composition bias toward basic and acidic residues. 4 PXXP repeats span residues 799-802 (PRQP), 832-835 (PGGP), 873-876 (PGNP), and 891-894 (PGSP). The disordered stretch occupies residues 901-950 (QEPANSQIDKSDFITFGKKEETKKKKKKKKGNKTQEKKEKGNSTTDNSDQ). Basic and acidic residues predominate over residues 909–923 (DKSDFITFGKKEETK).

Its subcellular location is the cell membrane. Functionally, potential calcium-dependent cell-adhesion protein. May be involved in the establishment and maintenance of specific neuronal connections in the brain. This chain is Protocadherin alpha-3 (PCDHA3), found in Pan troglodytes (Chimpanzee).